Consider the following 287-residue polypeptide: Myoblast determination protein 1 homolog B (287 aa).

Residues 96–147 (DRRRAATMRERRRLSKVNDAFETLKRCTSTNPNQRLPKVDILRNAISYIDSL) form the bHLH domain. 2 disordered regions span residues 161–202 (NMEH…FYTD) and 231–277 (QSPS…QLSH). Low complexity predominate over residues 168–188 (DSDASSPSSNCSDGMNSPPCS). The span at 267 to 277 (SPGNSCTQLSH) shows a compositional bias: polar residues.

As to quaternary structure, efficient DNA binding requires dimerization with another bHLH protein.

The protein localises to the nucleus. In terms of biological role, may act as a transcriptional activator that promotes transcription of muscle-specific target genes and plays a role in muscle differentiation. In Xenopus laevis (African clawed frog), this protein is Myoblast determination protein 1 homolog B (myod1-b).